The sequence spans 416 residues: Tryptophan synthase beta chain (416 aa).

The residue at position 109 (Lys-109) is an N6-(pyridoxal phosphate)lysine.

This sequence belongs to the TrpB family. Tetramer of two alpha and two beta chains. Pyridoxal 5'-phosphate serves as cofactor.

It carries out the reaction (1S,2R)-1-C-(indol-3-yl)glycerol 3-phosphate + L-serine = D-glyceraldehyde 3-phosphate + L-tryptophan + H2O. The protein operates within amino-acid biosynthesis; L-tryptophan biosynthesis; L-tryptophan from chorismate: step 5/5. Functionally, the beta subunit is responsible for the synthesis of L-tryptophan from indole and L-serine. This Synechococcus sp. (strain WH7803) protein is Tryptophan synthase beta chain.